A 788-amino-acid polypeptide reads, in one-letter code: Protein HHLF1 (788 aa).

Disordered regions lie at residues 1–82 (MAQR…NFWH), 366–385 (TGTA…ETEA), and 609–663 (IHKK…SRLP). Residues 16–25 (RGRGAGGPSG) show a composition bias toward gly residues. A compositionally biased stretch (low complexity) spans 26–56 (VGSSPPSSCVPMGAPSTAGTGASAAATTTPG). Residues 74-248 (SGNNSNFWHG…HGAGEVVRLY (175 aa)) form an RNA-binding region. Residues 650-659 (LRRDDEDWKP) are compositionally biased toward basic and acidic residues. The segment at 671 to 788 (LDETFWVLGS…IATHYHYNAQ (118 aa)) is interaction with host EIF2AK2/PKR.

Belongs to the herpesviridae US22 family. As to quaternary structure, interacts with host EIF2AK2/PKR; this interaction retains EIF2AK2 to the host nucleus and prevents its activation. Interaction (via N-terminus) with host BECN1; this interaction inhibits host autophagy. Interacts with the viral DNA polymerase accessory subunit UL44. Interacts with host HSPA5.

Its subcellular location is the virion. The protein resides in the host cytoplasm. It is found in the host nucleus. Functionally, inhibits the establishment of the antiviral state and the integrated stress response (ISR) in the infected cell. Prevents the phosphorylation of the host eukaryotic translation initiation factor eIF-2alpha/EIF2S1 and thus the shutoff of viral and cellular protein synthesis by directly interacting with EIF2AK2/PKR. Prevents stress granule formation in response to eIF-2alpha/EIF2S1 phosphorylation, thereby rescuing viral replication and protein synthesis. Also inhibits host autophagy by interacting with host Beclin-1/BECN1. This chain is Protein HHLF1 (TRS1), found in Homo sapiens (Human).